We begin with the raw amino-acid sequence, 307 residues long: Oxygen-dependent coproporphyrinogen-III oxidase (307 aa).

Position 99 (S99) interacts with substrate. Residues H103 and H113 each contribute to the a divalent metal cation site. The active-site Proton donor is H113. Residue 115–117 coordinates substrate; the sequence is NVR. A divalent metal cation contacts are provided by H152 and H182. An important for dimerization region spans residues 247 to 282; it reads YVEFNLVFDRGTLFGLQSGGRTESILMSMPPVANWR. 265–267 lines the substrate pocket; that stretch reads GGR.

It belongs to the aerobic coproporphyrinogen-III oxidase family. Homodimer. A divalent metal cation is required as a cofactor.

It localises to the cytoplasm. It carries out the reaction coproporphyrinogen III + O2 + 2 H(+) = protoporphyrinogen IX + 2 CO2 + 2 H2O. The protein operates within porphyrin-containing compound metabolism; protoporphyrin-IX biosynthesis; protoporphyrinogen-IX from coproporphyrinogen-III (O2 route): step 1/1. Involved in the heme biosynthesis. Catalyzes the aerobic oxidative decarboxylation of propionate groups of rings A and B of coproporphyrinogen-III to yield the vinyl groups in protoporphyrinogen-IX. The sequence is that of Oxygen-dependent coproporphyrinogen-III oxidase from Burkholderia orbicola (strain MC0-3).